The following is a 155-amino-acid chain: Ribosomal RNA large subunit methyltransferase H (155 aa).

Residues Leu72, Gly103, and 122-127 contribute to the S-adenosyl-L-methionine site; that span reads LSPLTL.

The protein belongs to the RNA methyltransferase RlmH family. As to quaternary structure, homodimer.

Its subcellular location is the cytoplasm. The enzyme catalyses pseudouridine(1915) in 23S rRNA + S-adenosyl-L-methionine = N(3)-methylpseudouridine(1915) in 23S rRNA + S-adenosyl-L-homocysteine + H(+). In terms of biological role, specifically methylates the pseudouridine at position 1915 (m3Psi1915) in 23S rRNA. This chain is Ribosomal RNA large subunit methyltransferase H, found in Haemophilus influenzae (strain PittEE).